Reading from the N-terminus, the 279-residue chain is Vacuolar iron transporter cccA (279 aa).

The segment at 1–44 is disordered; that stretch reads MLGGRHSHWSPQDLEEQAFSPYGTFPPSPTESTETSSSISSTRP. The segment covering 30-44 has biased composition (low complexity); sequence TESTETSSSISSTRP. A run of 5 helical transmembrane segments spans residues 55-75, 80-100, 185-205, 208-228, and 243-263; these read ILGL…LSAL, VVVV…GLGG, ITLA…YFMV, VLVA…VFGY, and IVAG…AAGA.

The protein belongs to the CCC1 family.

The protein localises to the vacuole membrane. It carries out the reaction Fe(2+)(in) = Fe(2+)(out). Functionally, vacuolar iron transporter involved in the transfer of iron from the cytosol to the vacuole for intracellular iron storage. Plays an essential role in iron detoxification during high iron conditions. In Arthroderma benhamiae (strain ATCC MYA-4681 / CBS 112371) (Trichophyton mentagrophytes), this protein is Vacuolar iron transporter cccA.